Here is a 1062-residue protein sequence, read N- to C-terminus: Exportin-T (1062 aa).

It belongs to the exportin family.

Its subcellular location is the nucleus. The protein resides in the cytoplasm. Functionally, tRNA nucleus export receptor which facilitates tRNA translocation across the nuclear pore complex. Involved in pre-tRNA splicing, probably by affecting the interaction of pre-tRNA with splicing endonuclease. In Vanderwaltozyma polyspora (strain ATCC 22028 / DSM 70294 / BCRC 21397 / CBS 2163 / NBRC 10782 / NRRL Y-8283 / UCD 57-17) (Kluyveromyces polysporus), this protein is Exportin-T (LOS1).